Consider the following 59-residue polypeptide: Large ribosomal subunit protein bL32 (59 aa).

The segment at 1-59 is disordered; sequence MAVQQNKKSPSKRGMHRSHDFLTTAPIAVEPTTGEVHLRHHVSPNGYYRGRKVVKTKND. Over residues 49–59 the composition is skewed to basic residues; that stretch reads RGRKVVKTKND.

The protein belongs to the bacterial ribosomal protein bL32 family.

This is Large ribosomal subunit protein bL32 from Ralstonia pickettii (strain 12J).